Consider the following 208-residue polypeptide: Large ribosomal subunit protein uL4 (208 aa).

The interval 44–89 (RRQGTHKAKNRSEVRGGGRKPYRQKGTGHARQGSTRSPLMTGGGTI) is disordered. The segment covering 60–71 (GGRKPYRQKGTG) has biased composition (basic residues).

The protein belongs to the universal ribosomal protein uL4 family. Part of the 50S ribosomal subunit.

In terms of biological role, one of the primary rRNA binding proteins, this protein initially binds near the 5'-end of the 23S rRNA. It is important during the early stages of 50S assembly. It makes multiple contacts with different domains of the 23S rRNA in the assembled 50S subunit and ribosome. Functionally, forms part of the polypeptide exit tunnel. The chain is Large ribosomal subunit protein uL4 from Chlorobium phaeobacteroides (strain BS1).